Reading from the N-terminus, the 560-residue chain is Bifunctional NAD(P)H-hydrate repair enzyme (560 aa).

The tract at residues 1 to 241 (MLSRLSERCT…WMTAPERMRV (241 aa)) is NAD(P)H-hydrate epimerase. The YjeF N-terminal domain occupies 29–235 (LRDAEPAAAA…SLGLEDWMTA (207 aa)). Residues 77-81 (NNGGD) are NADPHX 1; for epimerase activity. Residues asparagine 78 and aspartate 145 each contribute to the K(+) site. Positions 149 to 155 (GTGICGP) are NADPHX 1; for epimerase activity. (6S)-NADPHX contacts are provided by tyrosine 160 and aspartate 178. Serine 181 contacts K(+). The 299-residue stretch at 249–547 (LDDVYEYFGI…HRVPLIVNAS (299 aa)) folds into the YjeF C-terminal domain. The interval 249-560 (LDDVYEYFGI…PASRQRPSGQ (312 aa)) is ADP-dependent (S)-NAD(P)H-hydrate dehydratase. Glycine 351 contributes to the (6S)-NADPHX binding site. Positions 417–423 (HPGEAAR) are NADPHX 2; for dehydratase activity. Residues 454–458 (KGPGT) and 475–484 (NAGMASGGMG) each bind ADP. Aspartate 485 serves as a coordination point for (6S)-NADPHX.

It in the N-terminal section; belongs to the NnrE/AIBP family. This sequence in the C-terminal section; belongs to the NnrD/CARKD family. The cofactor is K(+).

The catalysed reaction is (6S)-NADHX + ADP = AMP + phosphate + NADH + H(+). It catalyses the reaction (6S)-NADPHX + ADP = AMP + phosphate + NADPH + H(+). It carries out the reaction (6R)-NADHX = (6S)-NADHX. The enzyme catalyses (6R)-NADPHX = (6S)-NADPHX. Functionally, bifunctional enzyme that catalyzes the epimerization of the S- and R-forms of NAD(P)HX and the dehydration of the S-form of NAD(P)HX at the expense of ADP, which is converted to AMP. This allows the repair of both epimers of NAD(P)HX, a damaged form of NAD(P)H that is a result of enzymatic or heat-dependent hydration. The sequence is that of Bifunctional NAD(P)H-hydrate repair enzyme from Leishmania major.